The primary structure comprises 65 residues: Alpha-toxin Bot11 (65 aa).

One can recognise an LCN-type CS-alpha/beta domain in the interval 2-64 (KDGYIVDDRN…VRTVQAGRCR (63 aa)). 4 disulfides stabilise this stretch: C12–C63, C16–C36, C22–C46, and C26–C48.

It belongs to the long (4 C-C) scorpion toxin superfamily. Sodium channel inhibitor family. Alpha subfamily. In terms of tissue distribution, expressed by the venom gland.

The protein localises to the secreted. In terms of biological role, alpha toxins bind voltage-independently at site-3 of sodium channels (Nav) and inhibit the inactivation of the activated channels, thereby blocking neuronal transmission. The sequence is that of Alpha-toxin Bot11 from Buthus occitanus tunetanus (Common European scorpion).